Consider the following 253-residue polypeptide: Core protein VP8 (253 aa).

The propeptide occupies 1–31; sequence MNDLLLENLFGEKALCAQVTRDQLLEIIAAG.

This sequence belongs to the chordopoxvirinae VP8 family. Post-translationally, undergoes morphogenesis-associated proteolysis which cleaves the 28 kDa to a 25-kDa product. Proteolytic cleavage of major core proteins P4a (A10L), P4b (A3L), and VP8 (L4R), which occurs at a late stage of core formation, is required for production of infectious mature virions (MV).

The protein resides in the virion. Its function is as follows. Major core structural protein. This chain is Core protein VP8, found in Vertebrata (FPV).